The chain runs to 208 residues: ATP synthase subunit beta, chloroplastic (208 aa).

Belongs to the ATPase alpha/beta chains family. In terms of assembly, F-type ATPases have 2 components, CF(1) - the catalytic core - and CF(0) - the membrane proton channel. CF(1) has five subunits: alpha(3), beta(3), gamma(1), delta(1), epsilon(1). CF(0) has four main subunits: a(1), b(1), b'(1) and c(9-12).

The protein resides in the plastid. The protein localises to the chloroplast thylakoid membrane. It carries out the reaction ATP + H2O + 4 H(+)(in) = ADP + phosphate + 5 H(+)(out). Functionally, produces ATP from ADP in the presence of a proton gradient across the membrane. The catalytic sites are hosted primarily by the beta subunits. The polypeptide is ATP synthase subunit beta, chloroplastic (atpB) (Lonchitis hirsuta (Tomato fern)).